The primary structure comprises 43 residues: Cytin chain A (43 aa).

It belongs to the protease inhibitor I13 (potato type I serine protease inhibitor) family. As to quaternary structure, heterodimer of an A chain and a B chain, linked by a disulfide bond.

Its function is as follows. Inhibitor of chymotrypsin. This chain is Cytin chain A, found in Theromyzon tessulatum (Duck leech).